The chain runs to 780 residues: Semaphorin-3G (780 aa).

The signal sequence occupies residues 1–22; that stretch reads MDPSAWAICCLLGSLLFHVGIP. The Sema domain maps to 32–519; sequence RLRLSYRDLL…SPLGVARLQL (488 aa). Residue Asn-44 is glycosylated (N-linked (GlcNAc...) asparagine). A disulfide bridge links Cys-105 with Cys-116. N-linked (GlcNAc...) asparagine glycosylation is present at Asn-127. Intrachain disulfides connect Cys-134–Cys-143, Cys-270–Cys-382, Cys-294–Cys-342, Cys-522–Cys-540, and Cys-603–Cys-655. The Ig-like C2-type domain maps to 569 to 671; sequence PAVQCLGQGQ…FSQTVVRFAL (103 aa). The N-linked (GlcNAc...) asparagine glycan is linked to Asn-652.

This sequence belongs to the semaphorin family. Highly expressed in lung and kidney. Weakly expressed in brain.

It localises to the secreted. Has chemorepulsive activities for sympathetic axons. Ligand of NRP2. The chain is Semaphorin-3G (Sema3g) from Mus musculus (Mouse).